Here is a 365-residue protein sequence, read N- to C-terminus: Beta-parvin (365 aa).

A compositionally biased stretch (pro residues) spans 1-12; it reads MSSAPPRSPTPR. A disordered region spans residues 1 to 52; the sequence is MSSAPPRSPTPRAPKMKKDESFLGKLGGTLARKKKTREVTDLQEEGKSAINS. Ser8 carries the post-translational modification Phosphoserine. Residues 37–47 are compositionally biased toward basic and acidic residues; the sequence is REVTDLQEEGK. 2 Calponin-homology (CH) domains span residues 88 to 195 and 255 to 362; these read KELV…MHFR and NLVK…TKYK.

Belongs to the parvin family. Interacts with ILK, ARHGEF6, PXN (via LD motifs), ACTN2 and actin. Interacts with DYSF. Post-translationally, phosphorylated by ILK. In terms of tissue distribution, expressed predominantly in heart and moderately in spleen, lung and skeletal muscle.

It is found in the cell junction. The protein localises to the focal adhesion. Its subcellular location is the cell membrane. It localises to the cytoplasm. The protein resides in the cytoskeleton. It is found in the cell projection. The protein localises to the lamellipodium. Its subcellular location is the myofibril. It localises to the sarcomere. The protein resides in the z line. In terms of biological role, adapter protein that plays a role in integrin signaling via ILK and in activation of the GTPases CDC42 and RAC1 by guanine exchange factors, such as ARHGEF6. Is involved in the reorganization of the actin cytoskeleton and formation of lamellipodia. Plays a role in cell adhesion, cell spreading, establishment or maintenance of cell polarity, and cell migration. The polypeptide is Beta-parvin (Parvb) (Mus musculus (Mouse)).